The sequence spans 451 residues: Chromosomal replication initiator protein DnaA (451 aa).

The segment at 1 to 73 is domain I, interacts with DnaA modulators; the sequence is MQDNLPQIWE…SNALKQTTSK (73 aa). The segment at 73 to 113 is domain II; that stretch reads KNFEIRFIVPSEEKISKTEESQKKLEGSVNISVASDQFVSN. Residues 114-330 form a domain III, AAA+ region region; the sequence is NLNPKYTFDT…GALIRIVAYS (217 aa). The ATP site is built by Gly158, Gly160, Lys161, and Thr162. A domain IV, binds dsDNA region spans residues 331–451; sequence SLTNSEITVE…ERIAKEIKGD (121 aa).

This sequence belongs to the DnaA family. In terms of assembly, oligomerizes as a right-handed, spiral filament on DNA at oriC.

It localises to the cytoplasm. Functionally, plays an essential role in the initiation and regulation of chromosomal replication. ATP-DnaA binds to the origin of replication (oriC) to initiate formation of the DNA replication initiation complex once per cell cycle. Binds the DnaA box (a 9 base pair repeat at the origin) and separates the double-stranded (ds)DNA. Forms a right-handed helical filament on oriC DNA; dsDNA binds to the exterior of the filament while single-stranded (ss)DNA is stabiized in the filament's interior. The ATP-DnaA-oriC complex binds and stabilizes one strand of the AT-rich DNA unwinding element (DUE), permitting loading of DNA polymerase. After initiation quickly degrades to an ADP-DnaA complex that is not apt for DNA replication. Binds acidic phospholipids. In Alkaliphilus oremlandii (strain OhILAs) (Clostridium oremlandii (strain OhILAs)), this protein is Chromosomal replication initiator protein DnaA.